Consider the following 347-residue polypeptide: Pre-B-cell leukemia transcription factor 1 (347 aa).

Residues 1–40 (MDDQPRLMHSHPGVGMAGHPSLSQHMQDGTGANEGEGGRK) are disordered. The region spanning 38 to 232 (GRKQDIGDIL…VMILRSRFLD (195 aa)) is the PBC domain. The segment at 45-124 (DILQQIMTIT…EGVAGPEKGG (80 aa)) is PBC-A. Positions 127–232 (AAAAAAAAAS…VMILRSRFLD (106 aa)) are PBC-B. Positions 233–295 (ARRKRRNFNK…NKRIRYKKNI (63 aa)) form a DNA-binding region, homeobox; TALE-type. Polar residues predominate over residues 318-331 (VHGSQANSPSTPSS). A disordered region spans residues 318–347 (VHGSQANSPSTPSSAGGYPSPCYQSDRRIQ).

The protein belongs to the TALE/PBX homeobox family. In terms of assembly, forms a heterodimer with meis1; the interaction is necessary for neural fate induction.

The protein resides in the nucleus. Acts as a transcriptional activator in complex with isoform 2 of meis1, to induce posterior neural and neural crest gene expression, and thereby specify hindbrain and neural crest cell fate. Binds to a highly conserved region in the promoter of the neural crest gene zic3. Required for the nuclear transport or retention of meis1. The polypeptide is Pre-B-cell leukemia transcription factor 1 (Xenopus tropicalis (Western clawed frog)).